Here is a 300-residue protein sequence, read N- to C-terminus: HTH-type transcriptional activator NahR (300 aa).

One can recognise an HTH lysR-type domain in the interval 6–63; that stretch reads LDLNLLVVFNQLLVDRRVSITAENLGLTQPAVSNALKRLRTSLQDPLFVRTHQGMEPT. Positions 23 to 42 form a DNA-binding region, H-T-H motif; it reads VSITAENLGLTQPAVSNALK.

This sequence belongs to the LysR transcriptional regulatory family.

It localises to the cytoplasm. Regulates the expression of the naphthalene (nahA-F) and salicylate (nahG-M) metabolism genes. The protein is HTH-type transcriptional activator NahR (nahR) of Pseudomonas putida (Arthrobacter siderocapsulatus).